The primary structure comprises 391 residues: Homocitrate synthase AksA (391 aa).

One can recognise a Pyruvate carboxyltransferase domain in the interval 20–271; the sequence is ITIYDTTLRD…DLGFNIGVLY (252 aa).

The protein belongs to the alpha-IPM synthase/homocitrate synthase family.

It catalyses the reaction acetyl-CoA + 2-oxoglutarate + H2O = (2R)-homocitrate + CoA + H(+). The enzyme catalyses 2-oxoadipate + acetyl-CoA + H2O = (R)-dihomocitrate + CoA + H(+). It carries out the reaction 2-oxoheptanedioate + acetyl-CoA + H2O = (R)-trihomocitrate + CoA + H(+). It participates in organic acid metabolism; 2-oxosuberate biosynthesis. Its function is as follows. Catalyzes the condensation of alpha-ketoglutarate and acetyl-CoA to form (R)-homocitrate. Can also catalyze the condensation of alpha-ketoadipate with acetyl-CoA to form (R)-homo(2)citrate, and the condensation of alpha-ketopimelate with acetyl-CoA to form (R)-homo(3)citrate. These reactions are part of the biosynthesis pathway of coenzyme B and biotin. The protein is Homocitrate synthase AksA (aksA) of Methanothermobacter thermautotrophicus (strain ATCC 29096 / DSM 1053 / JCM 10044 / NBRC 100330 / Delta H) (Methanobacterium thermoautotrophicum).